The sequence spans 68 residues: Protein SlyX homolog (68 aa).

This sequence belongs to the SlyX family.

In Pseudomonas fluorescens (strain Pf0-1), this protein is Protein SlyX homolog.